Reading from the N-terminus, the 854-residue chain is Fibroblast growth factor receptor 1 (854 aa).

The N-terminal stretch at 1–20 (MSGLFFLLSELLILLGKINS) is a signal peptide. The Extracellular segment spans residues 21-383 (VSKKSLCHPE…NFFMNSVPLS (363 aa)). An Ig-like C2-type 1 domain is found at 29 to 120 (PELFKIDNKL…SSVFFLINVT (92 aa)). The cysteines at positions 50 and 102 are disulfide-linked. N-linked (GlcNAc...) asparagine glycosylation is found at Asn-95, Asn-99, Asn-110, Asn-118, Asn-140, Asn-175, Asn-202, Asn-248, Asn-283, Asn-317, and Asn-346. 2 consecutive Ig-like C2-type domains span residues 147–259 (PEMG…FTFT) and 268–369 (PHLT…LSVI). The cysteines at positions 166 and 242 are disulfide-linked. An intrachain disulfide couples Cys-288 to Cys-353. A helical transmembrane segment spans residues 384 to 404 (IFLVIGFFVAIILLSLIIYCF). Residues 405-854 (FLQYKNAVDS…SDYLEPKCLV (450 aa)) lie on the Cytoplasmic side of the membrane. Residues 551–822 (KITNKKLGEG…EIVEILIDII (272 aa)) enclose the Protein kinase domain. ATP is bound by residues 557 to 565 (LGEGAFGMV) and Lys-585. The active-site Proton acceptor is Asp-689. A Phosphotyrosine; by autocatalysis modification is found at Tyr-718.

Belongs to the protein kinase superfamily. Tyr protein kinase family. Fibroblast growth factor receptor subfamily. Expressed in brain, stem cells and the mesenchymal cells.

It localises to the membrane. It catalyses the reaction L-tyrosyl-[protein] + ATP = O-phospho-L-tyrosyl-[protein] + ADP + H(+). In terms of biological role, receptor for basic fibroblast growth factor. In Dugesia japonica (Planarian), this protein is Fibroblast growth factor receptor 1 (FGFR1).